The sequence spans 697 residues: Potassium-transporting ATPase ATP-binding subunit (697 aa).

The next 4 helical transmembrane spans lie at 55 to 75 (PIMF…FFPS), 79 to 99 (SIPG…VLFA), 245 to 265 (LTLI…YLGF), and 271 to 291 (VLVA…LSAI). Asp-324 acts as the 4-aspartylphosphate intermediate in catalysis. Residues Asp-361, Glu-365, 393-400 (FKAETRMS), and Lys-412 each bind ATP. Mg(2+)-binding residues include Asp-535 and Asp-539. The next 3 membrane-spanning stretches (helical) occupy residues 605–625 (FAII…LNIM), 633–653 (AILS…PLAM), and 677–697 (GGVI…GLFI).

This sequence belongs to the cation transport ATPase (P-type) (TC 3.A.3) family. Type IA subfamily. As to quaternary structure, the system is composed of three essential subunits: KdpA, KdpB and KdpC.

It localises to the cell membrane. The catalysed reaction is K(+)(out) + ATP + H2O = K(+)(in) + ADP + phosphate + H(+). Part of the high-affinity ATP-driven potassium transport (or Kdp) system, which catalyzes the hydrolysis of ATP coupled with the electrogenic transport of potassium into the cytoplasm. This subunit is responsible for energy coupling to the transport system and for the release of the potassium ions to the cytoplasm. This is Potassium-transporting ATPase ATP-binding subunit from Bacillus cereus (strain AH820).